We begin with the raw amino-acid sequence, 68 residues long: Kasstasin (68 aa).

The N-terminal stretch at 1–20 (MMKKSMLLLFFLGMVSFSLA) is a signal peptide. Positions 21 to 44 (DDKREDEGEEKRADEGEEKRAAEE) are excised as a propeptide. A disordered region spans residues 22 to 41 (DKREDEGEEKRADEGEEKRA). K67 is modified (lysine amide).

Belongs to the frog skin active peptide (FSAP) family. Brevinin subfamily. Expressed by the skin dorsal glands.

The protein resides in the secreted. Functionally, peptide with potent vasoconstrictor properties (EC50=25 pM). Has moderate antimicrobial activity against Gram-positive bacterium S.aureus (MIC=55 uM) and against Gram-negative bacterium E.coli (MIC=110 uM). Not active against fungus C.albicans. Has weak hemolytic activity against horse erythrocytes. The protein is Kasstasin of Phlyctimantis maculatus (Red-legged running frog).